Consider the following 942-residue polypeptide: Leucine--tRNA ligase (942 aa).

A 'HIGH' region motif is present at residues 41-51 (PYLNGVLHAGH). The 'KMSKS' region signature appears at 633–637 (KLSKS). An ATP-binding site is contributed by Lys636.

This sequence belongs to the class-I aminoacyl-tRNA synthetase family.

It is found in the cytoplasm. The catalysed reaction is tRNA(Leu) + L-leucine + ATP = L-leucyl-tRNA(Leu) + AMP + diphosphate. This Methanocaldococcus jannaschii (strain ATCC 43067 / DSM 2661 / JAL-1 / JCM 10045 / NBRC 100440) (Methanococcus jannaschii) protein is Leucine--tRNA ligase.